Consider the following 410-residue polypeptide: MTKTRILNPTRFPSPKPLRGCGDANFMEQLLLHCATAIDSNDAALTHQILWVLNNIAPPDGDSTQRLTSAFLRALLSRAVSKTPTLSSTISFLPQADELHRFSVVELAAFVDLTPWHRFGFIAANAAILTAVEGYSTVHIVDLSLTHCMQIPTLIDAMASRLNKPPPLLKLTVVSSSDHFPPFINISYEELGSKLVNFATTRNITMEFTIVPSTYSDGFSSLLQQLRIYPSSFNEALVVNCHMMLRYIPEEPLTSSSSSLRTVFLKQLRSLNPRIVTLIEEDVDLTSENLVNRLKSAFNYFWIPFDTTDTFMSEQRRWYEAEISWKIENVVAKEGAERVERTETKRRWIERMREAEFGGVRVKEDAVADVKAMLEEHAVGWGMKKEDDDESLVLTWKGHSVVFATVWVPI.

The 391-residue stretch at 18 to 408 folds into the GRAS domain; sequence LRGCGDANFM…HSVVFATVWV (391 aa). The tract at residues 25-88 is leucine repeat I (LRI); sequence NFMEQLLLHC…AVSKTPTLSS (64 aa). The tract at residues 107–188 is VHIID; that stretch reads LAAFVDLTPW…HFPPFINISY (82 aa). The VHIID signature appears at 138 to 142; the sequence is VHIVD. The tract at residues 190-227 is leucine repeat II (LRII); sequence ELGSKLVNFATTRNITMEFTIVPSTYSDGFSSLLQQLR. The tract at residues 237-329 is PFYRE; sequence LVVNCHMMLR…EAEISWKIEN (93 aa). Residues 332-408 form an SAW region; that stretch reads AKEGAERVER…HSVVFATVWV (77 aa).

It belongs to the GRAS family. Expressed in seedlings, leaves and flowers.

It is found in the nucleus. In terms of biological role, probable transcription factor involved in plant development. The sequence is that of Scarecrow-like protein 32 (SCL32) from Arabidopsis thaliana (Mouse-ear cress).